The chain runs to 78 residues: Ubiquinol-cytochrome-c reductase complex assembly factor 3 (78 aa).

Residues 1-5 (MSGMR) lie on the Mitochondrial matrix side of the membrane. The chain crosses the membrane as a helical span at residues 6–26 (ILTGSVALGGLTYAIWIIFSP). Residues 27–78 (GEERKKEILKSLPEANPVRMEETRKRNAIMLQVLKDAAETNDNIARGFGSQK) lie on the Mitochondrial intermembrane side of the membrane.

It belongs to the UQCC3 family. Associates with the ubiquinol-cytochrome c reductase complex (mitochondrial respiratory chain complex III or cytochrome b-c1 complex).

Its subcellular location is the mitochondrion inner membrane. Its function is as follows. Required for the assembly of the ubiquinol-cytochrome c reductase complex (mitochondrial respiratory chain complex III or cytochrome b-c1 complex), mediating cytochrome b recruitment and probably stabilization within the complex. Thereby, plays an important role in ATP production by mitochondria. Cardiolipin-binding protein, it may also control the cardiolipin composition of mitochondria membranes and their morphology. This chain is Ubiquinol-cytochrome-c reductase complex assembly factor 3, found in Danio rerio (Zebrafish).